Consider the following 39-residue polypeptide: MTIDRTYPIFTVRWLAIHGLAVPTVSFLGSISAMQFIQR.

A helical transmembrane segment spans residues 14–30; that stretch reads WLAIHGLAVPTVSFLGS. His-18 serves as a coordination point for heme.

Belongs to the PsbE/PsbF family. In terms of assembly, heterodimer of an alpha subunit and a beta subunit. PSII is composed of 1 copy each of membrane proteins PsbA, PsbB, PsbC, PsbD, PsbE, PsbF, PsbH, PsbI, PsbJ, PsbK, PsbL, PsbM, PsbT, PsbX, PsbY, PsbZ, Psb30/Ycf12, at least 3 peripheral proteins of the oxygen-evolving complex and a large number of cofactors. It forms dimeric complexes. The cofactor is heme b.

It is found in the plastid. It localises to the chloroplast thylakoid membrane. In terms of biological role, this b-type cytochrome is tightly associated with the reaction center of photosystem II (PSII). PSII is a light-driven water:plastoquinone oxidoreductase that uses light energy to abstract electrons from H(2)O, generating O(2) and a proton gradient subsequently used for ATP formation. It consists of a core antenna complex that captures photons, and an electron transfer chain that converts photonic excitation into a charge separation. The sequence is that of Cytochrome b559 subunit beta from Allium textile (Textile onion).